Reading from the N-terminus, the 282-residue chain is NAD(P)H-hydrate epimerase (282 aa).

The transit peptide at 1-53 (MSGLRTLLGLGLLVAGSRLPRVISQQSVCRARPIWWGTQRRGSETMAGAAVKY) directs the protein to the mitochondrion. At S43 the chain carries Phosphoserine; by PKA. A YjeF N-terminal domain is found at 59–269 (AQAVDQELFN…ALEKKYQLNL (211 aa)). A (6S)-NADPHX-binding site is contributed by 113–117 (NNGGD). N114 lines the K(+) pocket. K138 is subject to N6-succinyllysine. D179 lines the K(+) pocket. (6S)-NADPHX is bound by residues 183-189 (GFSFKGD) and D212. A K(+)-binding site is contributed by S215.

Belongs to the NnrE/AIBP family. As to quaternary structure, homodimer. Interacts with APOA1 and APOA2. K(+) serves as cofactor. In terms of processing, undergoes physiological phosphorylation during sperm capacitation, downstream to PKA activation. Detected in testis and sperm (at protein level). Expressed at high levels in heart, liver, kidney, and testis.

Its subcellular location is the mitochondrion. It localises to the secreted. The enzyme catalyses (6R)-NADHX = (6S)-NADHX. It carries out the reaction (6R)-NADPHX = (6S)-NADPHX. In terms of biological role, catalyzes the epimerization of the S- and R-forms of NAD(P)HX, a damaged form of NAD(P)H that is a result of enzymatic or heat-dependent hydration. This is a prerequisite for the S-specific NAD(P)H-hydrate dehydratase to allow the repair of both epimers of NAD(P)HX. Accelerates cholesterol efflux from endothelial cells to high-density lipoprotein (HDL) and thereby regulates angiogenesis. In Mus musculus (Mouse), this protein is NAD(P)H-hydrate epimerase.